The following is a 328-amino-acid chain: DNA-directed RNA polymerase subunit alpha (328 aa).

The tract at residues 1–231 (MIYQMQMPAK…EHVAFFADFS (231 aa)) is alpha N-terminal domain (alpha-NTD). Residues 252 to 328 (MRKLLNTKIE…MDITKYQMKG (77 aa)) are alpha C-terminal domain (alpha-CTD).

This sequence belongs to the RNA polymerase alpha chain family. As to quaternary structure, homodimer. The RNAP catalytic core consists of 2 alpha, 1 beta, 1 beta' and 1 omega subunit. When a sigma factor is associated with the core the holoenzyme is formed, which can initiate transcription.

The enzyme catalyses RNA(n) + a ribonucleoside 5'-triphosphate = RNA(n+1) + diphosphate. Its function is as follows. DNA-dependent RNA polymerase catalyzes the transcription of DNA into RNA using the four ribonucleoside triphosphates as substrates. This chain is DNA-directed RNA polymerase subunit alpha, found in Chlorobium phaeovibrioides (strain DSM 265 / 1930) (Prosthecochloris vibrioformis (strain DSM 265)).